Here is a 206-residue protein sequence, read N- to C-terminus: Putative 3-methyladenine DNA glycosylase (206 aa).

This sequence belongs to the DNA glycosylase MPG family.

This is Putative 3-methyladenine DNA glycosylase from Salinibacter ruber (strain DSM 13855 / M31).